The primary structure comprises 166 residues: Cold-inducible RNA-binding protein (166 aa).

An RRM domain is found at 6-84 (GKLFVGGLNF…RQIRVDQAGK (79 aa)). Residues 68 to 166 (NGKSVDGRQI…DSYDSYTTQE (99 aa)) form a disordered region. The segment covering 93 to 120 (YRGGSSGGRGFFRGGRGRGGGGDRGYGG) has biased composition (gly residues). Low complexity predominate over residues 121–166 (SSRFENRSGGYQSSGSRDYYGRSHGSYGDRSGGSYRDSYDSYTTQE).

As to quaternary structure, interacts with prmt1. Interacts with elavl1/elrA (via RRM3). Associates with ribosomes. In terms of processing, methylated on arginine residues within RGG motifs. Methylation by prmt1 promotes cytoplasmic accumulation.

Its subcellular location is the nucleus. It localises to the nucleoplasm. It is found in the cytoplasm. Functionally, cold-inducible mRNA binding protein. Acts cooperatively with elavl1/elrA to stabilize AU-rich element (ARE)-containing mRNAs by binding to themm and inhibiting their deadenylation. Essential for embryonic gastrulation and neural development, acting to maintain the expression of a set of adhesion molecules, and cell movement during embryogenesis. Required for pronephros development. This Xenopus tropicalis (Western clawed frog) protein is Cold-inducible RNA-binding protein.